Consider the following 849-residue polypeptide: G-type lectin S-receptor-like serine/threonine-protein kinase B120 (849 aa).

An N-terminal signal peptide occupies residues M1 to A25. The Bulb-type lectin domain occupies A26–F153. Residues A26–K438 lie on the Extracellular side of the membrane. 6 N-linked (GlcNAc...) asparagine glycosylation sites follow: N110, N191, N210, N230, N273, and N282. Residues P295–G332 form the EGF-like; atypical domain. Disulfide bonds link C299–C311 and C305–C320. Residues N333, N349, and N388 are each glycosylated (N-linked (GlcNAc...) asparagine). A PAN domain is found at C346 to A427. 2 cysteine pairs are disulfide-bonded: C381–C402 and C385–C391. A helical transmembrane segment spans residues I439–L459. At W460–R849 the chain is on the cytoplasmic side. The Protein kinase domain maps to F529 to F814. Residues L535–V543 and K557 each bind ATP. S563 bears the Phosphoserine mark. The segment at T618–I635 is caM-binding. D654 serves as the catalytic Proton acceptor. 2 positions are modified to phosphoserine: S658 and S671. T688 carries the phosphothreonine modification. Residues S732 and S837 each carry the phosphoserine modification. T844 is subject to Phosphothreonine.

This sequence belongs to the protein kinase superfamily. Ser/Thr protein kinase family.

It is found in the cell membrane. The enzyme catalyses L-seryl-[protein] + ATP = O-phospho-L-seryl-[protein] + ADP + H(+). The catalysed reaction is L-threonyl-[protein] + ATP = O-phospho-L-threonyl-[protein] + ADP + H(+). The chain is G-type lectin S-receptor-like serine/threonine-protein kinase B120 (B120) from Arabidopsis thaliana (Mouse-ear cress).